The chain runs to 204 residues: Tat proofreading chaperone DmsD (204 aa).

The protein belongs to the TorD/DmsD family. DmsD subfamily.

Its function is as follows. Required for biogenesis/assembly of DMSO reductase, but not for the interaction of the DmsA signal peptide with the Tat system. May be part of a chaperone cascade complex that facilitates a folding-maturation pathway for the substrate protein. This chain is Tat proofreading chaperone DmsD, found in Escherichia coli O6:H1 (strain CFT073 / ATCC 700928 / UPEC).